The sequence spans 127 residues: Holo-[acyl-carrier-protein] synthase (127 aa).

2 residues coordinate Mg(2+): aspartate 9 and glutamate 58.

It belongs to the P-Pant transferase superfamily. AcpS family. Mg(2+) serves as cofactor.

It is found in the cytoplasm. It catalyses the reaction apo-[ACP] + CoA = holo-[ACP] + adenosine 3',5'-bisphosphate + H(+). Transfers the 4'-phosphopantetheine moiety from coenzyme A to a Ser of acyl-carrier-protein. This is Holo-[acyl-carrier-protein] synthase from Shewanella oneidensis (strain ATCC 700550 / JCM 31522 / CIP 106686 / LMG 19005 / NCIMB 14063 / MR-1).